The sequence spans 964 residues: Translation initiation factor IF-2 (964 aa).

A disordered region spans residues 35–353 (ASSTIEPPVV…RQKRNEYESM (319 aa)). Positions 64 to 108 (KPTPAKPAAKPGAPAPKPGTAQKPTAPTPGAVAAPKPGTAAAKPT) are enriched in low complexity. Positions 124 to 133 (PAKPTAPKPA) are enriched in pro residues. Basic and acidic residues predominate over residues 145–155 (AAKKAAEDKAT). Pro residues predominate over residues 166 to 178 (NAMPRPMAKPGPK). Over residues 220–233 (PRPQGGQRSGAPRD) the composition is skewed to low complexity. Gly residues-rich tracts occupy residues 234-252 (GQGG…GPRP) and 290-333 (GKGG…GRPG). A compositionally biased stretch (basic residues) spans 337-346 (RRGRKSKRQK). The tr-type G domain maps to 459–631 (KRPPVVTVMG…VCLTADAELD (173 aa)). The G1 stretch occupies residues 468–475 (GHVDHGKT). 468–475 (GHVDHGKT) contacts GTP. The G2 stretch occupies residues 493–497 (GITQG). The G3 stretch occupies residues 518 to 521 (DTPG). Residues 518–522 (DTPGH) and 572–575 (NKID) contribute to the GTP site. Positions 572–575 (NKID) are G4. The segment at 608-610 (SAK) is G5.

This sequence belongs to the TRAFAC class translation factor GTPase superfamily. Classic translation factor GTPase family. IF-2 subfamily.

The protein resides in the cytoplasm. In terms of biological role, one of the essential components for the initiation of protein synthesis. Protects formylmethionyl-tRNA from spontaneous hydrolysis and promotes its binding to the 30S ribosomal subunits. Also involved in the hydrolysis of GTP during the formation of the 70S ribosomal complex. The sequence is that of Translation initiation factor IF-2 from Corynebacterium efficiens (strain DSM 44549 / YS-314 / AJ 12310 / JCM 11189 / NBRC 100395).